We begin with the raw amino-acid sequence, 528 residues long: MNNSNNIFQQKRILLAVVISFLFFVIYDYFFIPKQPLKIEQNITQKNQQNTSINNTPNIQNATTNTPSAALVSQDSVISKVQSKHFEAQIDSFGRISAFYLKDRKYQNEKGEFINLVSKENSPYPLEMRFSDPSINSEAFKIPYVANASNLFVDENGSQVLKLTQNLSGLKIEKDITFYPKGNYEIEVKLSKNANYFISPGYRPNIAVDSYTVHGALVMDNKETIETYKDGDVEKDESANNVVMTSAFDRYYATFFYNFDKPLNVAISKDANQNPIVFAYSDNEFKAGGYIGSKEHVILRSIDPRLEAVVEYGWFTFIAKPMFEFLNFLHQYIGNWGWAIVVMTLIVRIILFPLTYKSMISMNKLKDLAPKMKDIRERYKGDPQKMNMHMMELYKKHGANPMSGCLPILLQIPIFFAIYRVLLNAIELKAAPWAFWIHDLSVMDPYFILPILMGATMFLQQLITPMTIQDPMQAKIMKFLPVIFTFFFITFPAGLTLYWFVNNLCSLVQQWVINKIFAKEHHKKTSGA.

The next 5 helical transmembrane spans lie at 13–33 (ILLAVVISFLFFVIYDYFFIP), 336–356 (WGWAIVVMTLIVRIILFPLTY), 406–426 (LPILLQIPIFFAIYRVLLNAI), 446–466 (YFILPILMGATMFLQQLITPM), and 481–501 (PVIFTFFFITFPAGLTLYWFV).

Belongs to the OXA1/ALB3/YidC family. Type 1 subfamily. In terms of assembly, interacts with the Sec translocase complex via SecD. Specifically interacts with transmembrane segments of nascent integral membrane proteins during membrane integration.

Its subcellular location is the cell inner membrane. In terms of biological role, required for the insertion and/or proper folding and/or complex formation of integral membrane proteins into the membrane. Involved in integration of membrane proteins that insert both dependently and independently of the Sec translocase complex, as well as at least some lipoproteins. Aids folding of multispanning membrane proteins. The chain is Membrane protein insertase YidC from Campylobacter jejuni subsp. jejuni serotype O:2 (strain ATCC 700819 / NCTC 11168).